Consider the following 213-residue polypeptide: Probable chemoreceptor glutamine deamidase CheD (213 aa).

The segment covering Met1 to Lys12 has biased composition (basic residues). The disordered stretch occupies residues Met1–Arg25.

Belongs to the CheD family.

It catalyses the reaction L-glutaminyl-[protein] + H2O = L-glutamyl-[protein] + NH4(+). Probably deamidates glutamine residues to glutamate on methyl-accepting chemotaxis receptors (MCPs), playing an important role in chemotaxis. The protein is Probable chemoreceptor glutamine deamidase CheD of Rhodopseudomonas palustris (strain BisA53).